A 309-amino-acid chain; its full sequence is Protein FdhE (309 aa).

The protein belongs to the FdhE family.

It localises to the cytoplasm. Necessary for formate dehydrogenase activity. The sequence is that of Protein FdhE from Escherichia coli O9:H4 (strain HS).